Reading from the N-terminus, the 225-residue chain is ATP-dependent dethiobiotin synthetase BioD (225 aa).

Residue 12-17 (GVGKTV) coordinates ATP. Mg(2+) is bound at residue Thr-16. Residue Lys-37 is part of the active site. Thr-41 lines the substrate pocket. ATP is bound by residues Asp-49, 108–111 (EGAG), and 197–199 (PAG). Positions 49 and 108 each coordinate Mg(2+).

The protein belongs to the dethiobiotin synthetase family. Homodimer. Requires Mg(2+) as cofactor.

It localises to the cytoplasm. It carries out the reaction (7R,8S)-7,8-diammoniononanoate + CO2 + ATP = (4R,5S)-dethiobiotin + ADP + phosphate + 3 H(+). It functions in the pathway cofactor biosynthesis; biotin biosynthesis; biotin from 7,8-diaminononanoate: step 1/2. Functionally, catalyzes a mechanistically unusual reaction, the ATP-dependent insertion of CO2 between the N7 and N8 nitrogen atoms of 7,8-diaminopelargonic acid (DAPA, also called 7,8-diammoniononanoate) to form a ureido ring. The chain is ATP-dependent dethiobiotin synthetase BioD from Mycolicibacterium smegmatis (strain ATCC 700084 / mc(2)155) (Mycobacterium smegmatis).